The primary structure comprises 267 residues: Putative hydro-lyase RALTA_B1245 (267 aa).

This sequence belongs to the D-glutamate cyclase family.

The sequence is that of Putative hydro-lyase RALTA_B1245 from Cupriavidus taiwanensis (strain DSM 17343 / BCRC 17206 / CCUG 44338 / CIP 107171 / LMG 19424 / R1) (Ralstonia taiwanensis (strain LMG 19424)).